A 657-amino-acid polypeptide reads, in one-letter code: Zinc finger protein 630 (657 aa).

Positions 8–79 (VTFEDVAVDF…ESELSRWIYP (72 aa)) constitute a KRAB domain. 2 consecutive C2H2-type zinc fingers follow at residues 263–285 (NVCS…QRIH) and 291–313 (YVCG…QRIH). Residues 319–341 (YECTKYGRAFSRKSPFTVHQRVH) form a C2H2-type 3; degenerate zinc finger. 9 consecutive C2H2-type zinc fingers follow at residues 347–369 (YECF…QRVH), 375–397 (FECS…QITH), 403–425 (YECT…QRTH), 431–453 (YKCG…QRIH), 459–481 (YVCT…QRLH), 487–509 (YMCT…QRIH), 515–537 (YQCG…LRVH), 543–565 (YECT…QRGH), and 571–593 (YECS…QKTH). The C2H2-type 13; degenerate zinc-finger motif lies at 599 to 621 (PECAESGMTFFWKSQMITYQRRH). The C2H2-type 14; degenerate zinc-finger motif lies at 627–649 (SRCSDCGKAFCQHVYFTGHQNPY).

The protein belongs to the krueppel C2H2-type zinc-finger protein family.

It localises to the nucleus. Functionally, may be involved in transcriptional regulation. The protein is Zinc finger protein 630 (ZNF630) of Homo sapiens (Human).